The chain runs to 346 residues: MAAAQAVEEMRTRVVLGEFGVRNVHTTDFPGNYAGYDDAWDQNRFEKNFRVDVVQMDEDTLEFDMVGIDAAIANAFRRILLAEVPTMAVEKVLVYNNTSIVQDEILAHRLGLIPILADPRLFEYRNQGEEEGTEIDTLQFRLQVRCTRNPNAAKDSSDPNELYVNHKVYTRHMTWVPLGNQADVFPEGTIRPVHDDILIAQLRPGQEIDLMMHCVKGIGKDHAKFSPVATASYRLLPAITLLEPVEGEAAEELSQCFSPGVIEVEEVQGKKVARVANARLDTFSREIFRHEKLKKAVRLARVRDHYIFSVESTGVLPPDVLVSEAIKILMGKCRRFLDELDAVEMD.

Position 2 is an N-acetylalanine (Ala-2).

This sequence belongs to the archaeal Rpo3/eukaryotic RPB3 RNA polymerase subunit family. In terms of assembly, component of the RNA polymerase I and RNA polymerase III complexes consisting of at least 13 and 17 subunits, respectively. Pol I complex consists of a ten-subunit catalytic core composed of POLR1A/RPA1, POLR1B/RPA2, POLR1C/RPAC1, POLR1D/RPAC2, POLR1H/RPA12, POLR2E/RPABC1, POLR2F/RPABC2, POLR2H/RPABC3, POLR2K/RPABC4 and POLR2L/RPABC5; a mobile stalk subunit POLR1F/RPA43 protruding from the core and additional subunits homologous to general transcription factors POLR1E/RPA49 and POLR1G/RPA34. Part of Pol I pre-initiation complex (PIC), in which Pol I core assembles with RRN3 and promoter-bound UTBF and SL1/TIF-IB complex. Pol III complex consists of a ten-subunit catalytic core composed of POLR3A/RPC1, POLR3B/RPC2, POLR1C/RPAC1, POLR1D/RPAC2, POLR3K/RPC10, POLR2E/RPABC1, POLR2F/RPABC2, POLR2H/RPABC3, POLR2K/RPABC4 and POLR2L/RPABC5; a mobile stalk composed of two subunits POLR3H/RPC8 and CRCP/RPC9, protruding from the core and functioning primarily in transcription initiation; and additional subunits homologous to general transcription factors of the RNA polymerase II machinery, POLR3C/RPC3-POLR3F/RPC6-POLR3G/RPC7 heterotrimer required for transcription initiation and POLR3D/RPC4-POLR3E/RPC5 heterodimer involved in both transcription initiation and termination.

Its subcellular location is the nucleus. The protein localises to the cytoplasm. It localises to the cytosol. In terms of biological role, DNA-dependent RNA polymerase catalyzes the transcription of DNA into RNA using the four ribonucleoside triphosphates as substrates. Common component of RNA polymerases I and III which synthesize ribosomal RNA precursors and short non-coding RNAs including 5S rRNA, snRNAs, tRNAs and miRNAs, respectively. POLR1C/RPAC1 is part of the polymerase core and may function as a clamp element that moves to open and close the cleft. In Mus musculus (Mouse), this protein is DNA-directed RNA polymerases I and III subunit RPAC1.